The following is a 574-amino-acid chain: Desiccation/radiation resistance protein DR_1769 (574 aa).

The N-terminal stretch at 1 to 33 (MPDPAARRFSLPPFPLAALALSVALLGAPASLA) is a signal peptide. Low complexity predominate over residues 400–438 (TAQTQARQAAAAASTSQQPRLPTLAQAPAPTPAPAQTTP). The interval 400–461 (TAQTQARQAA…APVPPVASPA (62 aa)) is disordered. Residues 439–459 (RPQPTPAQPATPAAPVPPVAS) are compositionally biased toward pro residues.

In terms of biological role, plays an important role in resistance to desiccation and radiation, maybe by protecting genome integrity under extreme conditions. This is Desiccation/radiation resistance protein DR_1769 from Deinococcus radiodurans (strain ATCC 13939 / DSM 20539 / JCM 16871 / CCUG 27074 / LMG 4051 / NBRC 15346 / NCIMB 9279 / VKM B-1422 / R1).